Reading from the N-terminus, the 226-residue chain is Ras-related protein RABA4a (226 aa).

T2 is modified (N-acetylthreonine). Residue 24–31 (GDSAVGKS) coordinates GTP. Residues 46-54 (SKATIGVEF) carry the Effector region motif. GTP contacts are provided by residues 72–76 (DTAGQ), 130–133 (NKSD), and 160–161 (SA). The segment at 189–226 (ASEDQENGNPGSLAGKKIDIVPGPGQVIPNKSNMCCNS) is disordered. Residues 217-226 (PNKSNMCCNS) are compositionally biased toward polar residues. 2 S-geranylgeranyl cysteine lipidation sites follow: C223 and C224.

The protein belongs to the small GTPase superfamily. Rab family. As to quaternary structure, interacts with TCTP1.

The protein resides in the cell membrane. Intracellular vesicle trafficking and protein transport. The protein is Ras-related protein RABA4a of Arabidopsis thaliana (Mouse-ear cress).